A 355-amino-acid chain; its full sequence is Serum paraoxonase/arylesterase 1 (355 aa).

A disulfide bridge connects residues cysteine 42 and cysteine 353. The Ca(2+) site is built by glutamate 53 and aspartate 54. The Proton acceptor role is filled by histidine 115. The Ca(2+) site is built by isoleucine 117, asparagine 168, aspartate 169, and asparagine 224. N-linked (GlcNAc...) asparagine glycosylation occurs at asparagine 253. Ca(2+)-binding residues include aspartate 269 and asparagine 270. Residues asparagine 270 and asparagine 324 are each glycosylated (N-linked (GlcNAc...) asparagine).

It belongs to the paraoxonase family. In terms of assembly, homodimer. Heterooligomer with phosphate-binding protein (HPBP). Interacts with CLU. Ca(2+) serves as cofactor. Glycosylated. Post-translationally, the signal sequence is not cleaved. In terms of processing, present in two forms, form B contains a disulfide bond, form A does not. As to expression, plasma, associated with HDL (at protein level). Expressed in liver, but not in heart, brain, placenta, lung, skeletal muscle, kidney or pancreas.

The protein resides in the secreted. It localises to the extracellular space. The enzyme catalyses a phenyl acetate + H2O = a phenol + acetate + H(+). It catalyses the reaction An aryl dialkyl phosphate + H2O = dialkyl phosphate + an aryl alcohol.. It carries out the reaction an N-acyl-L-homoserine lactone + H2O = an N-acyl-L-homoserine + H(+). In terms of biological role, hydrolyzes the toxic metabolites of a variety of organophosphorus insecticides. Capable of hydrolyzing a broad spectrum of organophosphate substrates and lactones, and a number of aromatic carboxylic acid esters. Mediates an enzymatic protection of low density lipoproteins against oxidative modification and the consequent series of events leading to atheroma formation. This chain is Serum paraoxonase/arylesterase 1 (PON1), found in Homo sapiens (Human).